The primary structure comprises 740 residues: Elongation factor 2 (740 aa).

The tr-type G domain occupies 23–264; that stretch reads AQIRNAGTLA…MIIEHVPPPN (242 aa). Residues 32–39, 98–102, and 152–155 contribute to the GTP site; these read AHVDHGKT, DTPGH, and NKID. The residue at position 605 (His605) is a Diphthamide.

Belongs to the TRAFAC class translation factor GTPase superfamily. Classic translation factor GTPase family. EF-G/EF-2 subfamily.

The protein localises to the cytoplasm. In terms of biological role, catalyzes the GTP-dependent ribosomal translocation step during translation elongation. During this step, the ribosome changes from the pre-translocational (PRE) to the post-translocational (POST) state as the newly formed A-site-bound peptidyl-tRNA and P-site-bound deacylated tRNA move to the P and E sites, respectively. Catalyzes the coordinated movement of the two tRNA molecules, the mRNA and conformational changes in the ribosome. The protein is Elongation factor 2 of Pyrobaculum calidifontis (strain DSM 21063 / JCM 11548 / VA1).